A 176-amino-acid chain; its full sequence is MSVNMDELKHQVMINQFVLTAGCAADQAKQLLQAAHWQFETALSTFFQETNIPYSHHHQMMCTPANTPATPPNFPDALTMFSRLKASESFHGGGGSSSPMATSATSPPPHFPHATGSFATPSWPTAASPPGGPQQHQPQPPLWTPAPPSPTSDWPPLAPQQATSEPRAHPAMEAER.

A disordered region spans residues 87 to 176 (SESFHGGGGS…RAHPAMEAER (90 aa)). Residues 120–137 (TPSWPTAASPPGGPQQHQ) are compositionally biased toward low complexity. The span at 138-150 (PQPPLWTPAPPSP) shows a compositional bias: pro residues. Over residues 166–176 (PRAHPAMEAER) the composition is skewed to basic and acidic residues.

This sequence belongs to the UBALD family.

The polypeptide is UBA-like domain-containing protein 1 (Ubald1) (Mus musculus (Mouse)).